The following is a 468-amino-acid chain: Adenosylhomocysteinase (468 aa).

The substrate site is built by T57, D132, and E194. 195-197 contacts NAD(+); it reads TTT. Positions 224 and 228 each coordinate substrate. NAD(+) is bound by residues N229, 258–263, E281, N316, 337–339, and N382; these read GFGDVG and IGH.

Belongs to the adenosylhomocysteinase family. NAD(+) serves as cofactor.

It is found in the cytoplasm. The catalysed reaction is S-adenosyl-L-homocysteine + H2O = L-homocysteine + adenosine. It functions in the pathway amino-acid biosynthesis; L-homocysteine biosynthesis; L-homocysteine from S-adenosyl-L-homocysteine: step 1/1. May play a key role in the regulation of the intracellular concentration of adenosylhomocysteine. This chain is Adenosylhomocysteinase, found in Methylorubrum extorquens (strain CM4 / NCIMB 13688) (Methylobacterium extorquens).